The sequence spans 205 residues: Thymidylate kinase (205 aa).

An ATP-binding site is contributed by 10–17 (GLEGAGKS).

It belongs to the thymidylate kinase family.

The catalysed reaction is dTMP + ATP = dTDP + ADP. Phosphorylation of dTMP to form dTDP in both de novo and salvage pathways of dTTP synthesis. This Idiomarina loihiensis (strain ATCC BAA-735 / DSM 15497 / L2-TR) protein is Thymidylate kinase.